Reading from the N-terminus, the 305-residue chain is Endonuclease 1 (305 aa).

Residues 1 to 28 form the signal peptide; that stretch reads MASAFRSSTRLILVLGILILCSVSSVRS. Positions 29 and 34 each coordinate a divalent metal cation. 29-34 contacts substrate; the sequence is WSKEGH. Cysteine 38 and cysteine 69 are disulfide-bonded. A divalent metal cation is bound by residues aspartate 73 and histidine 88. Residues 73–79, 88–91, and 98–103 contribute to the substrate site; these read DQIRHWY, HYID, and SYEYSR. 3 disulfides stabilise this stretch: cysteine 97–cysteine 249, cysteine 105–cysteine 115, and cysteine 230–cysteine 236. Positions 122 and 139 each coordinate substrate. Residue asparagine 122 is glycosylated (N-linked (GlcNAc...) asparagine). An N-linked (GlcNAc...) asparagine glycan is attached at asparagine 140. A divalent metal cation contacts are provided by histidine 150, aspartate 154, histidine 160, histidine 184, and aspartate 188. Positions 150 to 199 are substrate binding; it reads HFMGDIHQPMHVGFTSDEGGNTIDLRWYKHKSNLHHVWDREIILTALKEN. Asparagine 214 carries N-linked (GlcNAc...) asparagine glycosylation. Residues 287 to 305 constitute a propeptide, removed in mature form; sequence MILNRVFSDDHAIAGVAAT.

The protein belongs to the nuclease type I family. In terms of assembly, monomer. Mn(2+) is required as a cofactor. Requires Ca(2+) as cofactor. In terms of tissue distribution, mostly expressed in flowers and during leaf and stem senescence, and, to a lower extent, detectable at low levels in roots, leaves, and stems. Particularly expressed in senescing tissues in a NAC92/ORE1-dependent manner.

The enzyme catalyses Endonucleolytic cleavage to 5'-phosphomononucleotide and 5'-phosphooligonucleotide end-products.. Endonuclease that can use RNA, single-stranded and double-stranded DNA as substrates. Hydrolyzes single-stranded DNA and RNA without apparent specificity for bases during senescence. Endonuclease that recognizes and cleaves all types of mismatches with high efficiency, including heteroduplex double-stranded DNA. Maybe involved in programmed cell death (PCD) and senescence. The sequence is that of Endonuclease 1 from Arabidopsis thaliana (Mouse-ear cress).